The chain runs to 159 residues: Phosphopantetheine adenylyltransferase (159 aa).

Ser-8 provides a ligand contact to substrate. ATP-binding positions include 8-9 and His-16; that span reads SF. Residues Lys-40, Leu-73, and Lys-87 each contribute to the substrate site. Residues 88 to 90, Glu-98, and 122 to 128 contribute to the ATP site; these read GLR and YGYVSST.

Belongs to the bacterial CoaD family. As to quaternary structure, homohexamer. The cofactor is Mg(2+).

Its subcellular location is the cytoplasm. It catalyses the reaction (R)-4'-phosphopantetheine + ATP + H(+) = 3'-dephospho-CoA + diphosphate. It participates in cofactor biosynthesis; coenzyme A biosynthesis; CoA from (R)-pantothenate: step 4/5. Reversibly transfers an adenylyl group from ATP to 4'-phosphopantetheine, yielding dephospho-CoA (dPCoA) and pyrophosphate. The protein is Phosphopantetheine adenylyltransferase of Corynebacterium efficiens (strain DSM 44549 / YS-314 / AJ 12310 / JCM 11189 / NBRC 100395).